The sequence spans 164 residues: UPF0305 protein MTH_812 (164 aa).

The protein belongs to the UPF0305 family.

The sequence is that of UPF0305 protein MTH_812 from Methanothermobacter thermautotrophicus (strain ATCC 29096 / DSM 1053 / JCM 10044 / NBRC 100330 / Delta H) (Methanobacterium thermoautotrophicum).